A 606-amino-acid polypeptide reads, in one-letter code: Lysosomal cobalamin transporter ABCD4 (606 aa).

Residues 39–332 (NVLMFMTLLC…CFTQLIDLST (294 aa)) form the ABC transmembrane type-1 domain. Transmembrane regions (helical) follow at residues 43-63 (FMTL…VGLI), 76-96 (LDGF…NSTL), 190-210 (IFGY…PIVT), 279-299 (YLGS…GVYG), and 314-334 (AFVC…STTL). The region spanning 389–603 (LDRVSILAPS…GGGSWELTRI (215 aa)) is the ABC transporter domain. Position 421 to 428 (421 to 428 (GNTGTGKT)) interacts with ATP.

This sequence belongs to the ABC transporter superfamily. ABCD family. Peroxisomal fatty acyl CoA transporter (TC 3.A.1.203) subfamily. As to quaternary structure, homodimer or heterodimer. Interacts with LMBRD1; this interaction induces the translocation of ABCD4 from the ER to the lysosome membrane. Interacts with LMBRD1 and MMACHC; this interaction ensures the transport of cobalamin from the lysosome to the cytosol.

The protein localises to the endoplasmic reticulum membrane. It is found in the lysosome membrane. It catalyses the reaction an R-cob(III)alamin(out) + ATP + H2O = an R-cob(III)alamin(in) + ADP + phosphate + H(+). Lysosomal membrane protein that transports cobalamin (Vitamin B12) from the lysosomal lumen to the cytosol in an ATP-dependent manner. Targeted by LMBRD1 lysosomal chaperone from the endoplasmic reticulum to the lysosomal membrane. Then forms a complex with lysosomal chaperone LMBRD1 and cytosolic MMACHC to transport cobalamin across the lysosomal membrane. The polypeptide is Lysosomal cobalamin transporter ABCD4 (Mus musculus (Mouse)).